Consider the following 450-residue polypeptide: Divalent metal cation transporter MntH (450 aa).

Helical transmembrane passes span 44-64 (LLAFVGPGYLVSVGYMDPGNW), 77-97 (TLLSVILLSNLMAILLQSLAA), 121-141 (FLLWLACEAAIIACDLAEVIG), 152-172 (IPLIGGALIAALDAFLLLLLM), 181-201 (AFVIALLAVIAVCFAVQIVAA), 218-238 (IFTNPEMLYIAIGIIGATVMP), 273-293 (IALMLALFINAAILVVAAATF), 310-330 (LLSPLLGLGIASTLFAIALLA), 366-386 (GIAIIPVIIVTAIYGERGTAD), 387-407 (LLVFSQVVLSMQLPFAVIPLV), and 419-439 (FAISPYVAAIAWIVAGVIVVL).

This sequence belongs to the NRAMP family.

The protein resides in the cell inner membrane. In terms of biological role, h(+)-stimulated, divalent metal cation uptake system. This chain is Divalent metal cation transporter MntH, found in Bradyrhizobium diazoefficiens (strain JCM 10833 / BCRC 13528 / IAM 13628 / NBRC 14792 / USDA 110).